A 95-amino-acid polypeptide reads, in one-letter code: Small ribosomal subunit protein uS19 (95 aa).

It belongs to the universal ribosomal protein uS19 family.

Its function is as follows. Protein S19 forms a complex with S13 that binds strongly to the 16S ribosomal RNA. This Thermosipho melanesiensis (strain DSM 12029 / CIP 104789 / BI429) protein is Small ribosomal subunit protein uS19.